Here is a 112-residue protein sequence, read N- to C-terminus: Peptidyl-tRNA hydrolase (112 aa).

This sequence belongs to the PTH2 family.

Its subcellular location is the cytoplasm. It carries out the reaction an N-acyl-L-alpha-aminoacyl-tRNA + H2O = an N-acyl-L-amino acid + a tRNA + H(+). The natural substrate for this enzyme may be peptidyl-tRNAs which drop off the ribosome during protein synthesis. This is Peptidyl-tRNA hydrolase from Haloquadratum walsbyi (strain DSM 16790 / HBSQ001).